The chain runs to 161 residues: Endoribonuclease YbeY (161 aa).

Residues His121, His125, and His131 each coordinate Zn(2+).

This sequence belongs to the endoribonuclease YbeY family. It depends on Zn(2+) as a cofactor.

It localises to the cytoplasm. Single strand-specific metallo-endoribonuclease involved in late-stage 70S ribosome quality control and in maturation of the 3' terminus of the 16S rRNA. This is Endoribonuclease YbeY from Xylella fastidiosa (strain 9a5c).